A 2602-amino-acid polypeptide reads, in one-letter code: Filamin-B (2602 aa).

The tract at residues 1-239 (MPVTEKDLAE…VMTYLSQFPK (239 aa)) is actin-binding. 2 Calponin-homology (CH) domains span residues 16 to 122 (KIQQ…LHYS) and 139 to 242 (QTPK…KAKL). A Phosphothreonine modification is found at T216. The interval 244 to 267 (PGAPLKPKLNPKKARAYGRGIEPT) is disordered. 15 Filamin repeats span residues 249–347 (KPKL…EVSV), 349–446 (KAQG…VVQV), 447–543 (GEAC…EVQV), 544–636 (GPEA…MAFI), 640–736 (TGGY…RVNI), 737–839 (GQGS…RVKV), 840–938 (DPSH…TVGV), 939–1034 (AAPL…TVEA), 1035–1127 (SLPP…KADI), 1128–1222 (EMPF…RVKV), 1223–1322 (EPAV…KVAV), 1323–1415 (TEGC…RVPV), 1416–1511 (KDVV…KVKV), 1512–1608 (LPTY…RIRA), and 1609–1704 (TQTG…TVMA). T519 is modified (phosphothreonine). Position 681 is an N6-acetyllysine (K681). S730 carries the post-translational modification Phosphoserine. Phosphoserine is present on residues S886, S932, S983, and S1028. The interval 1128 to 1511 (EMPFDPSKVV…IPRSPFKVKV (384 aa)) is interaction with FBLP1. T1307 is modified (phosphothreonine). S1316 carries the phosphoserine modification. A phosphoserine mark is found at S1433, N1474, S1505, and S1602. Positions 1705-1728 (TDGEVTAVEEAPVNACPPGFRPWV) are hinge 1. Filamin repeat units follow at residues 1729–1813 (TEEA…SPLQ), 1816–1908 (VNYP…TAKI), 1919–1994 (KLGS…SIMV), 1997–2089 (SEIG…TVKI), 2091–2185 (GEGR…QFTV), 2188–2280 (LGEG…LVPV), 2282–2375 (APSD…KVRV), and 2379–2471 (GQAG…KAKV). K1780 bears the N6-acetyllysine mark. Residues 1862–2148 (SKAEISCIDN…RVTEAEIVPM (287 aa)) are interaction with the cytoplasmic tail of GP1BA. Residues 2060–2225 (SYFPTVPGVY…IWTREAGAGG (166 aa)) are interaction with FLNA 1. S2083, S2107, and S2113 each carry phosphoserine. The interval 2130-2602 (SAHVTSPSGR…PGSPFHVTVP (473 aa)) is interaction with INPPL1. 2 positions are modified to phosphoserine: S2369 and S2465. K2468 participates in a covalent cross-link: Glycyl lysine isopeptide (Lys-Gly) (interchain with G-Cter in ISG15). The tract at residues 2472–2506 (TGQRLVSPGSANETSSILVESVTRSSTETCYSAIP) is hinge 2. The segment at 2472–2602 (TGQRLVSPGS…PGSPFHVTVP (131 aa)) is self-association site, tail. Residues S2478, S2481, and S2492 each carry the phosphoserine modification. A Filamin 24 repeat occupies 2507-2601 (KASSDASKVT…IPGSPFHVTV (95 aa)). The tract at residues 2507–2602 (KASSDASKVT…PGSPFHVTVP (96 aa)) is interaction with FLNA 2. An N6-succinyllysine mark is found at K2518 and K2524. The residue at position 2576 (K2576) is an N6-acetyllysine.

The protein belongs to the filamin family. Homodimer. Interacts with MICALL2. Interacts with RFLNA and RFLNB. Isoform 1 interacts with FBLP1, FLNA, FLNC, GP1BA, INPPL1, ITGB1A, PSEN1 and PSEN2. Isoform 3 interacts with ITGB1A, ITGB1D, ITGB3 and ITGB6. Interacts with MYOT and MYOZ1. Interacts with HBV capsid protein. Interacts with ASB2 isoform 1; the interaction targets FLNB for proteasomal degradation. In terms of processing, ISGylation prevents ability to interact with the upstream activators of the JNK cascade and inhibits IFNA-induced JNK signaling. Ubiquitination by a SCF-like complex containing ASB2 isoform 1 leads to proteasomal degradation which promotes muscle differentiation. As to expression, ubiquitous. Isoform 1 and isoform 2 are expressed in placenta, bone marrow, brain, umbilical vein endothelial cells (HUVEC), retina and skeletal muscle. Isoform 1 is predominantly expressed in prostate, uterus, liver, thyroid, stomach, lymph node, small intestine, spleen, skeletal muscle, kidney, placenta, pancreas, heart, lung, platelets, endothelial cells, megakaryocytic and erythroleukemic cell lines. Isoform 2 is predominantly expressed in spinal cord, platelet and Daudi cells. Also expressed in thyroid adenoma, neurofibrillary tangles (NFT), senile plaques in the hippocampus and cerebral cortex in Alzheimer disease (AD). Isoform 3 and isoform 6 are expressed predominantly in lung, heart, skeletal muscle, testis, spleen, thymus and leukocytes. Isoform 4 and isoform 5 are expressed in heart.

The protein localises to the cytoplasm. It localises to the cell cortex. The protein resides in the cytoskeleton. It is found in the stress fiber. Its subcellular location is the myofibril. The protein localises to the sarcomere. It localises to the z line. In terms of biological role, connects cell membrane constituents to the actin cytoskeleton. May promote orthogonal branching of actin filaments and links actin filaments to membrane glycoproteins. Anchors various transmembrane proteins to the actin cytoskeleton. Interaction with FLNA may allow neuroblast migration from the ventricular zone into the cortical plate. Various interactions and localizations of isoforms affect myotube morphology and myogenesis. Isoform 6 accelerates muscle differentiation in vitro. This is Filamin-B (FLNB) from Homo sapiens (Human).